The sequence spans 106 residues: COX assembly mitochondrial protein homolog (106 aa).

N-acetylalanine is present on Ala-2. A CHCH domain is found at 28 to 71; the sequence is RERCSEQVQDFTKCCKDSGVLMVVKCRKENSALKDCLTSYYKDP. 2 short sequence motifs (cx9C motif) span residues 31–41 and 53–63; these read CSEQVQDFTKC and CRKENSALKDC. 2 disulfide bridges follow: Cys-31–Cys-63 and Cys-41–Cys-53.

It belongs to the CMC family. Component of the MITRAC (mitochondrial translation regulation assembly intermediate of cytochrome c oxidase complex) complex, the core components of this complex being COA3/MITRAC12 and COX14.

The protein localises to the mitochondrion. In terms of biological role, component of the MITRAC (mitochondrial translation regulation assembly intermediate of cytochrome c oxidase complex) complex, that regulates cytochrome c oxidase assembly. This is COX assembly mitochondrial protein homolog (CMC1) from Bos taurus (Bovine).